A 276-amino-acid chain; its full sequence is uncharacterized protein (276 aa).

The N-terminal stretch at 1-29 is a signal peptide; the sequence is MKSHVRSFKTYIRDEIIKKGGWVNAHAHA.

The protein belongs to the metallo-dependent hydrolases superfamily.

This is an uncharacterized protein from Haemophilus influenzae (strain ATCC 51907 / DSM 11121 / KW20 / Rd).